We begin with the raw amino-acid sequence, 354 residues long: UPF0425 pyridoxal phosphate-dependent protein MMP0002 (354 aa).

N6-(pyridoxal phosphate)lysine is present on Lys-210.

This sequence belongs to the UPF0425 family. Pyridoxal 5'-phosphate is required as a cofactor.

In Methanococcus maripaludis (strain DSM 14266 / JCM 13030 / NBRC 101832 / S2 / LL), this protein is UPF0425 pyridoxal phosphate-dependent protein MMP0002.